Here is a 72-residue protein sequence, read N- to C-terminus: Large ribosomal subunit protein bL31 (72 aa).

It belongs to the bacterial ribosomal protein bL31 family. Type A subfamily. As to quaternary structure, part of the 50S ribosomal subunit.

Functionally, binds the 23S rRNA. The chain is Large ribosomal subunit protein bL31 from Prosthecochloris aestuarii (strain DSM 271 / SK 413).